The chain runs to 185 residues: Peptidyl-tRNA hydrolase (185 aa).

Tyrosine 14 contributes to the tRNA binding site. Histidine 19 (proton acceptor) is an active-site residue. TRNA is bound by residues phenylalanine 64, asparagine 66, and asparagine 112.

Belongs to the PTH family. As to quaternary structure, monomer.

The protein resides in the cytoplasm. It catalyses the reaction an N-acyl-L-alpha-aminoacyl-tRNA + H2O = an N-acyl-L-amino acid + a tRNA + H(+). Its function is as follows. Hydrolyzes ribosome-free peptidyl-tRNAs (with 1 or more amino acids incorporated), which drop off the ribosome during protein synthesis, or as a result of ribosome stalling. Functionally, catalyzes the release of premature peptidyl moieties from peptidyl-tRNA molecules trapped in stalled 50S ribosomal subunits, and thus maintains levels of free tRNAs and 50S ribosomes. This chain is Peptidyl-tRNA hydrolase, found in Lacticaseibacillus paracasei (strain ATCC 334 / BCRC 17002 / CCUG 31169 / CIP 107868 / KCTC 3260 / NRRL B-441) (Lactobacillus paracasei).